A 181-amino-acid polypeptide reads, in one-letter code: Protein Syd (181 aa).

It belongs to the Syd family.

Its subcellular location is the cell inner membrane. Its function is as follows. Interacts with the SecY protein in vivo. May bind preferentially to an uncomplexed state of SecY, thus functioning either as a chelating agent for excess SecY in the cell or as a regulatory factor that negatively controls the translocase function. The chain is Protein Syd from Citrobacter koseri (strain ATCC BAA-895 / CDC 4225-83 / SGSC4696).